We begin with the raw amino-acid sequence, 65 residues long: uncharacterized protein (65 aa).

This is an uncharacterized protein from Rhizobium fredii (Sinorhizobium fredii).